The sequence spans 259 residues: 7alpha-hydroxysteroid dehydrogenase (259 aa).

Residues Ile18, 37 to 38 (DY), and Asn90 each bind NAD(+). Ser145 and Tyr158 together coordinate glycochenodeoxycholate. Residues Tyr158, Lys162, and 191 to 193 (ILT) contribute to the NAD(+) site. The active-site Proton acceptor is Tyr158.

The protein belongs to the short-chain dehydrogenases/reductases (SDR) family. Homotetramer.

It carries out the reaction cholate + NAD(+) = 3alpha,12alpha-dihydroxy-7-oxo-5beta-cholanate + NADH + H(+). It catalyses the reaction chenodeoxycholate + NAD(+) = 7-oxolithocholate + NADH + H(+). The catalysed reaction is taurochenodeoxycholate + NAD(+) = 7-oxotaurolithocholate + NADH + H(+). The enzyme catalyses glycochenodeoxycholate + NAD(+) = 7-oxoglycolithocholate + NADH + H(+). It carries out the reaction taurocholate + NAD(+) = 7-oxo-taurodeoxycholate + NADH + H(+). It catalyses the reaction glycocholate + NAD(+) = 7-oxo-glycodeoxycholate + NADH + H(+). The catalysed reaction is an aromatic primary alcohol + NAD(+) = an aromatic aldehyde + NADH + H(+). The enzyme catalyses benzyl alcohol + NAD(+) = benzaldehyde + NADH + H(+). It carries out the reaction 4-cyanobenzyl alcohol + NAD(+) = 4-cyanobenzaldehyde + NADH + H(+). It catalyses the reaction 4-acetoxybenzyl alcohol + NAD(+) = 4-acetoxybenzaldehyde + NADH + H(+). The catalysed reaction is 4-(trifluoromethyl)benzyl alcohol + NAD(+) = 4-(trifluoromethyl)benzaldehyde + NADH + H(+). 7alpha-hydroxysteroid dehydrogenase involved in the metabolism of bile acids in the gut. Catalyzes the NAD(+)-dependent oxidation of the 7alpha-hydroxy group of 7alpha-hydroxysteroids, such as cholate, chenodeoxycholate, taurochenodeoxycholate, glycochenodeoxycholate, taurocholate and glycocholate, to the corresponding 7-oxosteroids. Since it is also able to catalyze the reduction of nonsteroidal carbonyl compounds such as various benzaldehyde analogs to their corresponding benzyl alcohols, this enzyme may also function in the detoxification of xenobiotics containing carbonyl groups in the large intestine. The sequence is that of 7alpha-hydroxysteroid dehydrogenase from Bacteroides fragilis (strain ATCC 25285 / DSM 2151 / CCUG 4856 / JCM 11019 / LMG 10263 / NCTC 9343 / Onslow / VPI 2553 / EN-2).